The chain runs to 1997 residues: Autophagy-related protein 2 homolog A (1997 aa).

The Chorein N-terminal domain maps to 17-119 (CRYLLQHYLG…RGAAQGTESQ (103 aa)). Disordered regions lie at residues 241–281 (TSVQ…IQQI), 1292–1323 (HCPP…CLPA), 1371–1414 (EEIK…TDTD), 1492–1534 (SSRP…TQGG), and 1684–1718 (RLDG…SSTD). The segment covering 1311-1321 (PEGPSSLPPCL) has biased composition (pro residues). Polar residues-rich tracts occupy residues 1393-1408 (RVSQ…SGDS), 1493-1532 (SRPN…WRTQ), and 1690-1718 (KSSS…SSTD).

Belongs to the ATG2 family.

The protein resides in the preautophagosomal structure membrane. Its subcellular location is the lipid droplet. It is found in the endoplasmic reticulum membrane. It carries out the reaction a 1,2-diacyl-sn-glycero-3-phospho-L-serine(in) = a 1,2-diacyl-sn-glycero-3-phospho-L-serine(out). The catalysed reaction is a 1,2-diacyl-sn-glycero-3-phosphoethanolamine(in) = a 1,2-diacyl-sn-glycero-3-phosphoethanolamine(out). Lipid transfer protein involved in autophagosome assembly. Tethers the edge of the isolation membrane (IM) to the endoplasmic reticulum (ER) and mediates direct lipid transfer from ER to IM for IM expansion. Binds to the ER exit site (ERES), which is the membrane source for autophagosome formation, and extracts phospholipids from the membrane source and transfers them to atg9 (atg9a or atg9b) to the IM for membrane expansion. Also regulates lipid droplets morphology and distribution within the cell. The polypeptide is Autophagy-related protein 2 homolog A (Xenopus tropicalis (Western clawed frog)).